A 170-amino-acid chain; its full sequence is Putative 4-hydroxy-4-methyl-2-oxoglutarate aldolase (170 aa).

Residues 85–88 and Arg107 contribute to the substrate site; that span reads GDMI. Asp108 is a binding site for a divalent metal cation.

It belongs to the class II aldolase/RraA-like family. In terms of assembly, homotrimer. It depends on a divalent metal cation as a cofactor.

The enzyme catalyses 4-hydroxy-4-methyl-2-oxoglutarate = 2 pyruvate. The catalysed reaction is oxaloacetate + H(+) = pyruvate + CO2. Its function is as follows. Catalyzes the aldol cleavage of 4-hydroxy-4-methyl-2-oxoglutarate (HMG) into 2 molecules of pyruvate. Also contains a secondary oxaloacetate (OAA) decarboxylase activity due to the common pyruvate enolate transition state formed following C-C bond cleavage in the retro-aldol and decarboxylation reactions. The sequence is that of Putative 4-hydroxy-4-methyl-2-oxoglutarate aldolase from Acinetobacter baylyi (strain ATCC 33305 / BD413 / ADP1).